A 316-amino-acid polypeptide reads, in one-letter code: tRNA dimethylallyltransferase (316 aa).

17-24 (GPTASGKT) contributes to the ATP binding site. 19 to 24 (TASGKT) contributes to the substrate binding site. Interaction with substrate tRNA regions lie at residues 42-45 (DSAL), 166-170 (QRLSR), 247-252 (RCVGYR), and 280-287 (KRQITWLR).

It belongs to the IPP transferase family. As to quaternary structure, monomer. Requires Mg(2+) as cofactor.

It catalyses the reaction adenosine(37) in tRNA + dimethylallyl diphosphate = N(6)-dimethylallyladenosine(37) in tRNA + diphosphate. Functionally, catalyzes the transfer of a dimethylallyl group onto the adenine at position 37 in tRNAs that read codons beginning with uridine, leading to the formation of N6-(dimethylallyl)adenosine (i(6)A). This chain is tRNA dimethylallyltransferase, found in Escherichia coli O127:H6 (strain E2348/69 / EPEC).